The primary structure comprises 419 residues: Putative zinc metalloprotease M6_Spy1682 (419 aa).

His-18 lines the Zn(2+) pocket. Glu-19 is a catalytic residue. His-22 serves as a coordination point for Zn(2+). 4 consecutive transmembrane segments (helical) span residues 169 to 191 (LITN…ILLV), 301 to 323 (LAWS…FSLN), 343 to 365 (LESV…LIPI), and 392 to 411 (AYIT…AVTW). Residues 175–274 (GPMNNFILGI…LKTVAVKPQK (100 aa)) form the PDZ domain.

The protein belongs to the peptidase M50B family. The cofactor is Zn(2+).

The protein resides in the cell membrane. This chain is Putative zinc metalloprotease M6_Spy1682, found in Streptococcus pyogenes serotype M6 (strain ATCC BAA-946 / MGAS10394).